The chain runs to 145 residues: Large ribosomal subunit protein uL15 (145 aa).

Positions 1–13 (MIRSKRKINKLRG) are enriched in basic residues. The tract at residues 1–44 (MIRSKRKINKLRGSRSNGGGCTKKRRGAGNKGGRGNAGASKQHW) is disordered.

Belongs to the universal ribosomal protein uL15 family. In terms of assembly, part of the 50S ribosomal subunit.

Its function is as follows. Binds to the 23S rRNA. This chain is Large ribosomal subunit protein uL15, found in Methanobrevibacter smithii (strain ATCC 35061 / DSM 861 / OCM 144 / PS).